A 320-amino-acid polypeptide reads, in one-letter code: 1,5-anhydro-D-fructose reductase (320 aa).

Tyr40 (proton donor) is an active-site residue. His102 contacts substrate. NADP(+)-binding positions include Gln194 and 265–277 (IPGS…IKEN).

The protein belongs to the aldo/keto reductase family. Monomer.

Its subcellular location is the cytoplasm. It catalyses the reaction 1,5-anhydro-D-glucitol + NADP(+) = 1,5-anhydro-D-fructose + NADPH + H(+). Its activity is regulated as follows. Inhibited by p-chloromercuribenzoic acid and alkyliodines. Functionally, catalyzes the NADPH-dependent reduction of 1,5-anhydro-D-fructose (AF) to 1,5-anhydro-D-glucitol. The polypeptide is 1,5-anhydro-D-fructose reductase (AKR1E2) (Macaca fascicularis (Crab-eating macaque)).